We begin with the raw amino-acid sequence, 1397 residues long: Probable cyclin-dependent serine/threonine-protein kinase DDB_G0292550 (1397 aa).

One can recognise a Protein kinase domain in the interval 4–287; sequence FQIIELIGSG…TKEALNHPWF (284 aa). Residues 10 to 18 and lysine 33 contribute to the ATP site; that span reads IGSGSYGKV. Catalysis depends on aspartate 124, which acts as the Proton acceptor. 8 disordered regions span residues 412–567, 671–728, 763–831, 845–949, 996–1101, 1115–1174, 1227–1324, and 1340–1397; these read NNNN…NNNN, PLSI…NNGF, NEMG…NGNN, NNNN…YANH, NGLA…NTHN, NNGF…NSPV, NSAS…SFGL, and KKKK…IVLD. Low complexity predominate over residues 676–715; sequence SQHHNTSSSDTHNNNNNNYNNNNNNNNNINNNNINSIHNQ. 4 stretches are compositionally biased toward low complexity: residues 845–941, 1012–1021, 1028–1101, and 1115–1155; these read NNNN…NGNG, NSNNNNSGNN, NTFN…NTHN, and NNGF…TKNN. Over residues 1156-1171 the composition is skewed to polar residues; sequence TQFGPNILSSTQTSHN. Low complexity-rich tracts occupy residues 1253-1321 and 1354-1380; these read NNNN…NNNS and SSSQ…SQTQ.

It belongs to the protein kinase superfamily. CMGC Ser/Thr protein kinase family. CDC2/CDKX subfamily.

It carries out the reaction L-seryl-[protein] + ATP = O-phospho-L-seryl-[protein] + ADP + H(+). The enzyme catalyses L-threonyl-[protein] + ATP = O-phospho-L-threonyl-[protein] + ADP + H(+). This chain is Probable cyclin-dependent serine/threonine-protein kinase DDB_G0292550, found in Dictyostelium discoideum (Social amoeba).